The primary structure comprises 360 residues: tRNA (guanine(37)-N(1))-methyltransferase (360 aa).

Residues R197, D235 to L236, and N283 contribute to the S-adenosyl-L-methionine site.

Belongs to the class I-like SAM-binding methyltransferase superfamily. TRM5/TYW2 family. As to quaternary structure, monomer.

Its subcellular location is the mitochondrion matrix. The protein localises to the nucleus. It is found in the cytoplasm. It carries out the reaction guanosine(37) in tRNA + S-adenosyl-L-methionine = N(1)-methylguanosine(37) in tRNA + S-adenosyl-L-homocysteine + H(+). Its function is as follows. Specifically methylates the N1 position of guanosine-37 in various cytoplasmic and mitochondrial tRNAs. Methylation is not dependent on the nature of the nucleoside 5' of the target nucleoside. This is the first step in the biosynthesis of wybutosine (yW), a modified base adjacent to the anticodon of tRNAs and required for accurate decoding. The protein is tRNA (guanine(37)-N(1))-methyltransferase of Encephalitozoon cuniculi (strain GB-M1) (Microsporidian parasite).